We begin with the raw amino-acid sequence, 168 residues long: Pheromone-binding protein (168 aa).

Residues 1-26 (MNKTTTKMKVAVVAIVVYLAVGNVDS) form the signal peptide. 3 disulfide bridges follow: C45–C80, C76–C134, and C123–C143.

This sequence belongs to the PBP/GOBP family. Homodimer. As to expression, antenna.

Functionally, this major soluble protein in olfactory sensilla of male moths might serve to solubilize the extremely hydrophobic pheromone molecules and to transport pheromone through the aqueous lymph to receptors located on olfactory cilia. PBP is also found in sensilla from female M.sexta antennae. This Manduca sexta (Tobacco hawkmoth) protein is Pheromone-binding protein.